The following is an 87-amino-acid chain: Large ribosomal subunit protein bL27 (87 aa).

Residues 1-21 (MAHKKAGGSSRNGRDSESKRL) form a disordered region.

It belongs to the bacterial ribosomal protein bL27 family.

The polypeptide is Large ribosomal subunit protein bL27 (Burkholderia ambifaria (strain MC40-6)).